The primary structure comprises 141 residues: Large ribosomal subunit protein uL11 (141 aa).

Belongs to the universal ribosomal protein uL11 family. In terms of assembly, part of the ribosomal stalk of the 50S ribosomal subunit. Interacts with L10 and the large rRNA to form the base of the stalk. L10 forms an elongated spine to which L12 dimers bind in a sequential fashion forming a multimeric L10(L12)X complex. In terms of processing, one or more lysine residues are methylated.

Forms part of the ribosomal stalk which helps the ribosome interact with GTP-bound translation factors. The protein is Large ribosomal subunit protein uL11 of Clostridium botulinum (strain Kyoto / Type A2).